We begin with the raw amino-acid sequence, 295 residues long: 4-diphosphocytidyl-2-C-methyl-D-erythritol kinase (295 aa).

Lys22 is a catalytic residue. Residue 106–116 (PAGGGFGGGSS) participates in ATP binding. Asp148 is a catalytic residue.

This sequence belongs to the GHMP kinase family. IspE subfamily.

The enzyme catalyses 4-CDP-2-C-methyl-D-erythritol + ATP = 4-CDP-2-C-methyl-D-erythritol 2-phosphate + ADP + H(+). It participates in isoprenoid biosynthesis; isopentenyl diphosphate biosynthesis via DXP pathway; isopentenyl diphosphate from 1-deoxy-D-xylulose 5-phosphate: step 3/6. In terms of biological role, catalyzes the phosphorylation of the position 2 hydroxy group of 4-diphosphocytidyl-2C-methyl-D-erythritol. The chain is 4-diphosphocytidyl-2-C-methyl-D-erythritol kinase from Xanthomonas campestris pv. campestris (strain 8004).